Reading from the N-terminus, the 190-residue chain is ATP synthase subunit b (190 aa).

The chain crosses the membrane as a helical span at residues 34-54 (LDIFETNLINLAILVGILFYF).

This sequence belongs to the ATPase B chain family. In terms of assembly, F-type ATPases have 2 components, F(1) - the catalytic core - and F(0) - the membrane proton channel. F(1) has five subunits: alpha(3), beta(3), gamma(1), delta(1), epsilon(1). F(0) has four main subunits: a(1), b(1), b'(1) and c(10-14). The alpha and beta chains form an alternating ring which encloses part of the gamma chain. F(1) is attached to F(0) by a central stalk formed by the gamma and epsilon chains, while a peripheral stalk is formed by the delta, b and b' chains.

It localises to the cellular thylakoid membrane. Its function is as follows. F(1)F(0) ATP synthase produces ATP from ADP in the presence of a proton or sodium gradient. F-type ATPases consist of two structural domains, F(1) containing the extramembraneous catalytic core and F(0) containing the membrane proton channel, linked together by a central stalk and a peripheral stalk. During catalysis, ATP synthesis in the catalytic domain of F(1) is coupled via a rotary mechanism of the central stalk subunits to proton translocation. Functionally, component of the F(0) channel, it forms part of the peripheral stalk, linking F(1) to F(0). This Nostoc punctiforme (strain ATCC 29133 / PCC 73102) protein is ATP synthase subunit b.